Consider the following 477-residue polypeptide: Glycogen synthase (477 aa).

Lys-15 contributes to the ADP-alpha-D-glucose binding site.

Belongs to the glycosyltransferase 1 family. Bacterial/plant glycogen synthase subfamily.

The catalysed reaction is [(1-&gt;4)-alpha-D-glucosyl](n) + ADP-alpha-D-glucose = [(1-&gt;4)-alpha-D-glucosyl](n+1) + ADP + H(+). It functions in the pathway glycan biosynthesis; glycogen biosynthesis. Its function is as follows. Synthesizes alpha-1,4-glucan chains using ADP-glucose. This Escherichia coli O139:H28 (strain E24377A / ETEC) protein is Glycogen synthase.